The primary structure comprises 242 residues: RNA transcription, translation and transport factor protein (242 aa).

The protein belongs to the RTRAF family. As to quaternary structure, homodimer. Component of a tRNA-splicing ligase complex.

It localises to the nucleus. Its subcellular location is the cytoplasm. It is found in the cytosol. The protein resides in the perinuclear region. The protein localises to the cytoskeleton. It localises to the microtubule organizing center. Its subcellular location is the centrosome. Functionally, RNA-binding protein involved in modulation of mRNA transcription by Polymerase II. Component of the tRNA-splicing ligase complex. The sequence is that of RNA transcription, translation and transport factor protein from Danio rerio (Zebrafish).